The sequence spans 101 residues: Small ribosomal subunit protein bS6 (101 aa).

It belongs to the bacterial ribosomal protein bS6 family.

Its function is as follows. Binds together with bS18 to 16S ribosomal RNA. The polypeptide is Small ribosomal subunit protein bS6 (Paenarthrobacter aurescens (strain TC1)).